Consider the following 358-residue polypeptide: MEDTLYKSLKSIKEKYDSNEKKLLLPEVFNNIKEYTKISKENNSISEIVENFNKFLINEQTIKDAKILLDEKDEEMVSFAKNEIHKSELENQELEKKLRILILPKDENDERNVIIEIRGAAGGDEANIFAGDLLKMYNKWADINKMKLKLLDYANASSGGFSQVTFLVEGDKAYSKLKFESGVHRVQRIPVTETQGRVHTSTTTVTVMPEVDDVAEVEINPVDLKIDTFRSSGPGGQSVNTTDSAVRITHLPSGIVVSSQDEKSQISNRESALKILKSKLYDLEIKKRNEETGKFRKLAGSGARSEKIRTYNYPQDRITDHRIGFSTSLKIAMEGKINNIIEALHAEEQAEKIKEANL.

Gln237 is modified (N5-methylglutamine).

This sequence belongs to the prokaryotic/mitochondrial release factor family. Methylated by PrmC. Methylation increases the termination efficiency of RF1.

It is found in the cytoplasm. Functionally, peptide chain release factor 1 directs the termination of translation in response to the peptide chain termination codons UAG and UAA. The chain is Peptide chain release factor 1 from Mycoplasma mobile (strain ATCC 43663 / 163K / NCTC 11711) (Mesomycoplasma mobile).